The primary structure comprises 371 residues: Vasopressin V2 receptor (371 aa).

A disordered region spans residues Met-1–Asp-30. Residues Met-1–Arg-38 are Extracellular-facing. Residues Ser-15 to Ser-24 are compositionally biased toward low complexity. Asn-22 carries N-linked (GlcNAc...) asparagine glycosylation. A helical membrane pass occupies residues Ala-39 to Ala-63. Residues Arg-64–Phe-77 lie on the Cytoplasmic side of the membrane. Residues Ile-78–Ala-98 form a helical membrane-spanning segment. Topologically, residues Trp-99–Arg-113 are extracellular. Residues Ala-114–Leu-135 traverse the membrane as a helical segment. The Cytoplasmic portion of the chain corresponds to Asp-136–Pro-159. A helical membrane pass occupies residues Val-160 to Gln-180. The Extracellular portion of the chain corresponds to Arg-181 to Trp-200. A helical transmembrane segment spans residues Gly-201 to Gly-220. The Cytoplasmic segment spans residues Ile-221 to Arg-271. The segment at Pro-240–Gly-259 is disordered. The helical transmembrane segment at Met-272–Trp-293 threads the bilayer. At Ala-294–Val-308 the chain is on the extracellular side. The chain crosses the membrane as a helical span at residues Leu-309–Phe-328. Residues Ser-329–Ser-371 are Cytoplasmic-facing. Residues Cys-341 and Cys-342 are each lipidated (S-palmitoyl cysteine). The tract at residues Pro-349–Ser-371 is disordered. The span at Glu-356–Ser-371 shows a compositional bias: polar residues.

It belongs to the G-protein coupled receptor 1 family. Vasopressin/oxytocin receptor subfamily. In terms of assembly, interacts with ARRDC4. Identified in a complex containing at least ARRDC4, V2R and HGS. Interacts with TMEM147. In terms of tissue distribution, kidney.

The protein resides in the cell membrane. Its function is as follows. Receptor for arginine vasopressin. The activity of this receptor is mediated by G proteins which activate adenylate cyclase. Involved in renal water reabsorption. This chain is Vasopressin V2 receptor (AVPR2), found in Homo sapiens (Human).